Reading from the N-terminus, the 240-residue chain is Acyl-protein thioesterase 1 (240 aa).

Residues Ser-129, Asp-183, and His-219 each act as charge relay system in the active site.

This sequence belongs to the AB hydrolase superfamily. AB hydrolase 2 family.

It localises to the cytoplasm. The protein resides in the nucleus. It catalyses the reaction S-hexadecanoyl-L-cysteinyl-[protein] + H2O = L-cysteinyl-[protein] + hexadecanoate + H(+). Hydrolyzes fatty acids from S-acylated cysteine residues in proteins with a strong preference for palmitoylated G-alpha proteins over other acyl substrates. Mediates the deacylation of G-alpha proteins such as GPA1 in vivo, but has weak or no activity toward palmitoylated Ras proteins. Has weak lysophospholipase activity in vitro; however such activity may not exist in vivo. This Mycosarcoma maydis (Corn smut fungus) protein is Acyl-protein thioesterase 1.